The following is a 500-amino-acid chain: Glycerol kinase (500 aa).

T12 serves as a coordination point for ADP. ATP contacts are provided by T12, T13, and S14. T12 serves as a coordination point for sn-glycerol 3-phosphate. Residue R16 coordinates ADP. Sn-glycerol 3-phosphate is bound by residues R82, E83, Y135, and D245. Glycerol is bound by residues R82, E83, Y135, D245, and Q246. Positions 267 and 310 each coordinate ADP. T267, G310, Q314, and G411 together coordinate ATP. Residues G411 and N415 each contribute to the ADP site.

It belongs to the FGGY kinase family. As to quaternary structure, homotetramer and homodimer (in equilibrium).

The catalysed reaction is glycerol + ATP = sn-glycerol 3-phosphate + ADP + H(+). It functions in the pathway polyol metabolism; glycerol degradation via glycerol kinase pathway; sn-glycerol 3-phosphate from glycerol: step 1/1. Its activity is regulated as follows. Activated by phosphorylation and inhibited by fructose 1,6-bisphosphate (FBP). Key enzyme in the regulation of glycerol uptake and metabolism. Catalyzes the phosphorylation of glycerol to yield sn-glycerol 3-phosphate. The sequence is that of Glycerol kinase from Clostridium perfringens (strain SM101 / Type A).